Here is a 491-residue protein sequence, read N- to C-terminus: MSALLSESDLNDFISPALACVKPTQVSGGKKDNVNMNGEYEVSTEPDQLEKVSITLSDCLACSGCITSSEEILLSSQSHSVFLKNWGKLSQQQDKFLVVSVSPQCRLSLAQYYGLTLEAADLCLMNFFQKHFQCKYMVGTEMGRIISISKTVEKIIAHKKQKENTGADRKPLLSAVCPGFLIYTEKTKPQLVPMLLNVKSPQQITGSLIRATFESLAIARESFYHLSLMPCFDKKLEASRPESLDDGIDCVITPREIVTMLQELNLDFKSFLTEDTSLYGRLSPPGWDPRVHWASNLGGTCGGYAYQYVTAVQRLHPGSQMIVLEGRNSDIVEYRLLHDDRIIAAASELSGFRNIQNLVRKLTSGSGSERKRNITALRKRRTGPKANSREMAAATAATADPYHSDYIEVNACPGACMNGGGLLNGEQNSLKRKQLVQTLNKRHGEELAMVDPLTLGPKLEEAAARPLSLEYVFAPVKQAVEKDLVSVGSTW.

[4Fe-4S] cluster contacts are provided by Cys-20, Cys-59, Cys-62, Cys-65, Cys-177, Cys-231, Cys-412, and Cys-416.

The protein belongs to the NARF family. In terms of assembly, interacts with CIA1.

It localises to the cytoplasm. The protein resides in the nucleus. In terms of biological role, essential component of a cytosolic Fe/S protein assembly machinery. Required for maturation of extramitochondrial Fe/S proteins. May play a role in the transfer of pre-assembled Fe/S clusters to target apoproteins. This is Cytosolic Fe-S cluster assembly factor NAR1 (NAR1) from Saccharomyces cerevisiae (strain ATCC 204508 / S288c) (Baker's yeast).